Consider the following 24-residue polypeptide: Carboxypeptidase 1 (24 aa).

N-linked (GlcNAc...) asparagine glycans are attached at residues Asn3 and Asn11.

The protein belongs to the peptidase S10 family. In terms of assembly, monomer. In terms of processing, contains both N- and O-linked sugar chains. The N-linked oligosaccharides are unique structures of Man(10)GlcNAc(2) and Man(11)GlcNAc(2). Deglycosylation does neither affect catalytic activity, pH, thermal stability, or resistance to proteolysis of the enzyme.

Its subcellular location is the secreted. Its activity is regulated as follows. Inhibited by DFP. Its function is as follows. Removes acidic, neutral and basic amino acids as well as proline from the C-terminal position. Digests preferentially peptides containing a hydrophobic residue in P1' position, as well as arginine, lysine or phenylalanine in P1 position of ester substrate. Catalyzes also peptide synthesis. In Aspergillus niger, this protein is Carboxypeptidase 1.